Reading from the N-terminus, the 86-residue chain is Large ribosomal subunit protein bL31B (86 aa).

It belongs to the bacterial ribosomal protein bL31 family. Type B subfamily. In terms of assembly, part of the 50S ribosomal subunit.

This Cupriavidus necator (strain ATCC 17699 / DSM 428 / KCTC 22496 / NCIMB 10442 / H16 / Stanier 337) (Ralstonia eutropha) protein is Large ribosomal subunit protein bL31B.